The following is a 143-amino-acid chain: Large ribosomal subunit protein uL11 (143 aa).

Belongs to the universal ribosomal protein uL11 family. As to quaternary structure, part of the ribosomal stalk of the 50S ribosomal subunit. Interacts with L10 and the large rRNA to form the base of the stalk. L10 forms an elongated spine to which L12 dimers bind in a sequential fashion forming a multimeric L10(L12)X complex. One or more lysine residues are methylated.

In terms of biological role, forms part of the ribosomal stalk which helps the ribosome interact with GTP-bound translation factors. This is Large ribosomal subunit protein uL11 from Rhizobium etli (strain ATCC 51251 / DSM 11541 / JCM 21823 / NBRC 15573 / CFN 42).